The sequence spans 383 residues: Succinyl-diaminopimelate desuccinylase (383 aa).

His73 contacts Zn(2+). The active site involves Asp75. Asp107 serves as a coordination point for Zn(2+). The active-site Proton acceptor is Glu141. Glu142, Glu170, and His356 together coordinate Zn(2+).

This sequence belongs to the peptidase M20A family. DapE subfamily. In terms of assembly, homodimer. The cofactor is Zn(2+). Co(2+) serves as cofactor.

The catalysed reaction is N-succinyl-(2S,6S)-2,6-diaminopimelate + H2O = (2S,6S)-2,6-diaminopimelate + succinate. Its pathway is amino-acid biosynthesis; L-lysine biosynthesis via DAP pathway; LL-2,6-diaminopimelate from (S)-tetrahydrodipicolinate (succinylase route): step 3/3. Its function is as follows. Catalyzes the hydrolysis of N-succinyl-L,L-diaminopimelic acid (SDAP), forming succinate and LL-2,6-diaminopimelate (DAP), an intermediate involved in the bacterial biosynthesis of lysine and meso-diaminopimelic acid, an essential component of bacterial cell walls. The chain is Succinyl-diaminopimelate desuccinylase from Pseudomonas aeruginosa (strain ATCC 15692 / DSM 22644 / CIP 104116 / JCM 14847 / LMG 12228 / 1C / PRS 101 / PAO1).